The primary structure comprises 207 residues: Superoxide dismutase [Mn] (207 aa).

Mn(2+) contacts are provided by His-28, His-76, Asp-160, and His-164.

Belongs to the iron/manganese superoxide dismutase family. Mn(2+) serves as cofactor.

The protein resides in the secreted. The enzyme catalyses 2 superoxide + 2 H(+) = H2O2 + O2. Functionally, destroys superoxide anion radicals which are normally produced within the cells and which are toxic to biological systems. In Mycolicibacterium paratuberculosis (strain ATCC BAA-968 / K-10) (Mycobacterium paratuberculosis), this protein is Superoxide dismutase [Mn] (sodA).